Consider the following 102-residue polypeptide: Small ribosomal subunit protein uS10 (102 aa).

It belongs to the universal ribosomal protein uS10 family. Part of the 30S ribosomal subunit.

In terms of biological role, involved in the binding of tRNA to the ribosomes. This is Small ribosomal subunit protein uS10 from Methanobrevibacter smithii (strain ATCC 35061 / DSM 861 / OCM 144 / PS).